The sequence spans 318 residues: Protease HtpX homolog (318 aa).

3 helical membrane passes run 1 to 21 (MLEA…VGRL), 35 to 55 (ILGL…GSAI), and 56 to 76 (AGLV…SRIV). Histidine 167 serves as a coordination point for Zn(2+). The active site involves glutamate 168. Histidine 171 contacts Zn(2+). Helical transmembrane passes span 178 to 198 (LVMT…DPWL) and 209 to 229 (IAFL…LVAA). Glutamate 235 provides a ligand contact to Zn(2+).

This sequence belongs to the peptidase M48B family. Zn(2+) is required as a cofactor.

It localises to the cell membrane. The sequence is that of Protease HtpX homolog from Methanopyrus kandleri (strain AV19 / DSM 6324 / JCM 9639 / NBRC 100938).